We begin with the raw amino-acid sequence, 941 residues long: MutS protein homolog 1 (941 aa).

Position 747-754 (747-754 (GPNMAGKS)) interacts with ATP.

The protein belongs to the DNA mismatch repair MutS family.

The protein localises to the cytoplasm. Its subcellular location is the mitochondrion. Its function is as follows. Involved in mitochondrial DNA repair. The sequence is that of MutS protein homolog 1 (msh1) from Schizosaccharomyces pombe (strain 972 / ATCC 24843) (Fission yeast).